The following is a 465-amino-acid chain: UDP-N-acetylmuramate--L-alanine ligase (465 aa).

115-121 (GAHGKTT) contributes to the ATP binding site.

Belongs to the MurCDEF family.

Its subcellular location is the cytoplasm. It carries out the reaction UDP-N-acetyl-alpha-D-muramate + L-alanine + ATP = UDP-N-acetyl-alpha-D-muramoyl-L-alanine + ADP + phosphate + H(+). The protein operates within cell wall biogenesis; peptidoglycan biosynthesis. Cell wall formation. The protein is UDP-N-acetylmuramate--L-alanine ligase of Coxiella burnetii (strain CbuG_Q212) (Coxiella burnetii (strain Q212)).